The chain runs to 448 residues: MSISKAIEKVEARYAHQPEFIQAVKEVAITIKPLYDAHPEYDKLKVFERLVEPDRVFGFRVNWEDDNGEIQINRGWRVQFSNALGPYKGGLRFHPTVNQSVLKFLGFEQIFKNALTGLPIGGGKGGSDFDPKGKTDSEIRRFCYAFMRELHHYVNKDMDVPAGDIGVGGREVSYMFAMYKNLTRESTGVITGKGVGFGGSLMRTEATGYGAVYFLQNMLAAQNESIEGKKVLVSGAGNVSLHAAEKATLIGAIVLTVSDSKGTIYDAKGLNQEKIDWLKVQKDQHKPLADYVEVFGGEWMADQKPWSIKADIAIPSATQNEINEEDAKLLVDNGVKYIVEGANMPLTAEAIDYIRLHRVHYAPGKAANAGGVAVSALEMSQNSVRQYQTFEQVDERLQGIMKDIHDSSAQASEMYGQTDEGYIDYMSGANMVGFKRVADALVAFGILN.

Positions 88, 109, and 112 each coordinate substrate. Catalysis depends on K124, which acts as the Proton donor. G163 is a binding site for substrate. NADP(+)-binding residues include T207 and N238. Residue S375 participates in substrate binding.

This sequence belongs to the Glu/Leu/Phe/Val dehydrogenases family. As to quaternary structure, homohexamer.

It carries out the reaction L-glutamate + NADP(+) + H2O = 2-oxoglutarate + NH4(+) + NADPH + H(+). Catalyzes the reversible oxidative deamination of glutamate to alpha-ketoglutarate and ammonia. This is NADP-specific glutamate dehydrogenase (gdhA) from Psychrobacter sp. (strain TAD1).